The following is a 280-amino-acid chain: Protein FAM131C (280 aa).

Positions Q195–N280 are disordered. Positions S197 to F211 are enriched in polar residues. Over residues S215–P227 the composition is skewed to pro residues.

Belongs to the FAM131 family.

The polypeptide is Protein FAM131C (FAM131C) (Homo sapiens (Human)).